Reading from the N-terminus, the 71-residue chain is Mitotic-spindle organizing protein 1B (71 aa).

It belongs to the MOZART1 family. As to quaternary structure, homo- and heteromultimer. Part of the gamma-tubulin complex. Interacts with TUBB2/TUBB3, GIP2, GCP3 and TSA1 (via C-terminal domain). In terms of tissue distribution, mostly expressed in siliques and flowers, and, to a lower extent, in leaves, roots and seedlings, with highest levels in young tissues and meristematic cells, and the vasculature.

The protein localises to the cytoplasm. Its subcellular location is the cytoskeleton. The protein resides in the microtubule organizing center. It localises to the spindle. It is found in the nucleus. The protein localises to the phragmoplast. Its subcellular location is the nucleus envelope. Required for gamma-tubulin complex recruitment to the microtubule organizing centers (MTOCs). During mitosis, modulates gamma-tubulin complex localization, spindle stability and chromosomal segregation. Necessary for gametophyte development and embryogenesis. The sequence is that of Mitotic-spindle organizing protein 1B (GIP1) from Arabidopsis thaliana (Mouse-ear cress).